The chain runs to 387 residues: Protein PHYTOCHROME KINASE SUBSTRATE 3 (387 aa).

Disordered stretches follow at residues 1–21 (MDAE…PQLL), 74–128 (HEKE…CNSQ), and 242–271 (LSTK…ASVA). Polar residues predominate over residues 12–21 (QISSYKPQLL). Residues 74-83 (HEKENTHDHP) show a composition bias toward basic and acidic residues. Positions 114–128 (HGTPSVRSESSCNSQ) are enriched in polar residues. Low complexity predominate over residues 242-261 (LSTKNNNHNNNGNNSSMSSN).

The protein belongs to the PKS family.

Its function is as follows. Probably involved in the phytochrome signaling pathway. This Arabidopsis thaliana (Mouse-ear cress) protein is Protein PHYTOCHROME KINASE SUBSTRATE 3 (PKS3).